A 306-amino-acid polypeptide reads, in one-letter code: Pantothenate kinase (306 aa).

Gly-91–Ser-98 is a binding site for ATP.

This sequence belongs to the prokaryotic pantothenate kinase family.

The protein resides in the cytoplasm. It carries out the reaction (R)-pantothenate + ATP = (R)-4'-phosphopantothenate + ADP + H(+). Its pathway is cofactor biosynthesis; coenzyme A biosynthesis; CoA from (R)-pantothenate: step 1/5. The chain is Pantothenate kinase from Streptococcus suis (strain 05ZYH33).